The chain runs to 253 residues: Polyprenal reductase (253 aa).

4 helical membrane passes run 18 to 38, 78 to 98, 123 to 143, and 200 to 220; these read LSFF…PEFL, FLSL…IIFG, HYLV…ISLY, and IIYS…VWVI.

This sequence belongs to the steroid 5-alpha reductase family. Polyprenal reductase subfamily.

It localises to the endoplasmic reticulum membrane. The enzyme catalyses a di-trans,poly-cis-dolichal + NADP(+) = a di-trans,poly-cis-polyprenal + NADPH + H(+). It functions in the pathway protein modification; protein glycosylation. Its function is as follows. Plays a key role in early steps of protein N-linked glycosylation by being involved in the conversion of polyprenol into dolichol. Acts as a polyprenal reductase that mediates the reduction of polyprenal into dolichal in a NADP-dependent mechanism. Dolichols are required for the synthesis of dolichol-linked monosaccharides and the oligosaccharide precursor used for N-glycosylation. The sequence is that of Polyprenal reductase from Saccharomyces cerevisiae (strain ATCC 204508 / S288c) (Baker's yeast).